Reading from the N-terminus, the 141-residue chain is Oleosin 14.9 kDa (141 aa).

The segment covering M1–P22 has biased composition (basic and acidic residues). The disordered stretch occupies residues M1–A24. The polar stretch occupies residues M1–K29. Positions A30–S141 are hydrophobic. A run of 3 helical transmembrane segments spans residues G38 to A58, P60 to I80, and T81 to Y101.

The protein belongs to the oleosin family.

Its subcellular location is the lipid droplet. The protein localises to the membrane. May have a structural role to stabilize the lipid body during desiccation of the seed by preventing coalescence of the oil. Probably interacts with both lipid and phospholipid moieties of lipid bodies. May also provide recognition signals for specific lipase anchorage in lipolysis during seedling growth. The sequence is that of Oleosin 14.9 kDa (OL3) from Arabidopsis thaliana (Mouse-ear cress).